Here is an 876-residue protein sequence, read N- to C-terminus: Leucine--tRNA ligase (876 aa).

The short motif at 43–53 (PYPSGRIHMGH) is the 'HIGH' region element. Positions 632-636 (KMSKS) match the 'KMSKS' region motif. Lysine 635 is a binding site for ATP.

The protein belongs to the class-I aminoacyl-tRNA synthetase family.

The protein resides in the cytoplasm. It catalyses the reaction tRNA(Leu) + L-leucine + ATP = L-leucyl-tRNA(Leu) + AMP + diphosphate. The polypeptide is Leucine--tRNA ligase (Rhizobium etli (strain CIAT 652)).